We begin with the raw amino-acid sequence, 154 residues long: Xanthine-guanine phosphoribosyltransferase (154 aa).

5-phospho-alpha-D-ribose 1-diphosphate-binding positions include 37–38 (RG), Arg-69, and 88–96 (EDLVDSGDT). Arg-69 contributes to the GMP binding site. Asp-89 contributes to the Mg(2+) binding site. Asp-92 and Ile-135 together coordinate guanine. Xanthine contacts are provided by Asp-92 and Ile-135. GMP is bound by residues 92–96 (DSGDT) and 134–135 (WI).

This sequence belongs to the purine/pyrimidine phosphoribosyltransferase family. XGPT subfamily. Homotetramer. It depends on Mg(2+) as a cofactor.

It is found in the cell inner membrane. The enzyme catalyses GMP + diphosphate = guanine + 5-phospho-alpha-D-ribose 1-diphosphate. It carries out the reaction XMP + diphosphate = xanthine + 5-phospho-alpha-D-ribose 1-diphosphate. It catalyses the reaction IMP + diphosphate = hypoxanthine + 5-phospho-alpha-D-ribose 1-diphosphate. Its pathway is purine metabolism; GMP biosynthesis via salvage pathway; GMP from guanine: step 1/1. The protein operates within purine metabolism; XMP biosynthesis via salvage pathway; XMP from xanthine: step 1/1. Functionally, purine salvage pathway enzyme that catalyzes the transfer of the ribosyl-5-phosphate group from 5-phospho-alpha-D-ribose 1-diphosphate (PRPP) to the N9 position of the 6-oxopurines guanine and xanthine to form the corresponding ribonucleotides GMP (guanosine 5'-monophosphate) and XMP (xanthosine 5'-monophosphate), with the release of PPi. To a lesser extent, also acts on hypoxanthine. This chain is Xanthine-guanine phosphoribosyltransferase, found in Vibrio parahaemolyticus serotype O3:K6 (strain RIMD 2210633).